The sequence spans 124 residues: Protein MGF 110-4L (124 aa).

Positions 1-28 (MLVIFLGILGLLANQVLGLPTQAGGHLR) are cleaved as a signal peptide. The N-linked (GlcNAc...) asparagine; by host glycan is linked to Asn64. A Prevents secretion from ER motif is present at residues 121–124 (KEDL).

The protein belongs to the asfivirus MGF 110 family.

The protein resides in the virion. Its subcellular location is the host endoplasmic reticulum-Golgi intermediate compartment. Causes the redistribution of lumenal ER protein to an enlarged ERGIC compartment. The chain is Protein MGF 110-4L from Ornithodoros (relapsing fever ticks).